A 194-amino-acid polypeptide reads, in one-letter code: RNA polymerase II subunit A C-terminal domain phosphatase SSU72 like protein 3 (194 aa).

It belongs to the SSU72 phosphatase family.

It is found in the nucleus. It carries out the reaction O-phospho-L-seryl-[protein] + H2O = L-seryl-[protein] + phosphate. It catalyses the reaction O-phospho-L-threonyl-[protein] + H2O = L-threonyl-[protein] + phosphate. Protein phosphatase that catalyzes the dephosphorylation of the C-terminal domain of RNA polymerase II. Plays a role in RNA processing and termination. The polypeptide is RNA polymerase II subunit A C-terminal domain phosphatase SSU72 like protein 3 (Homo sapiens (Human)).